Consider the following 433-residue polypeptide: tRNA(Ile)-lysidine synthase (433 aa).

ATP is bound at residue 27-32 (SGGLDS).

The protein belongs to the tRNA(Ile)-lysidine synthase family.

Its subcellular location is the cytoplasm. It catalyses the reaction cytidine(34) in tRNA(Ile2) + L-lysine + ATP = lysidine(34) in tRNA(Ile2) + AMP + diphosphate + H(+). Its function is as follows. Ligates lysine onto the cytidine present at position 34 of the AUA codon-specific tRNA(Ile) that contains the anticodon CAU, in an ATP-dependent manner. Cytidine is converted to lysidine, thus changing the amino acid specificity of the tRNA from methionine to isoleucine. This chain is tRNA(Ile)-lysidine synthase, found in Legionella pneumophila subsp. pneumophila (strain Philadelphia 1 / ATCC 33152 / DSM 7513).